The sequence spans 428 residues: UPF0597 protein PBPRB0240 (428 aa).

It belongs to the UPF0597 family.

This is UPF0597 protein PBPRB0240 from Photobacterium profundum (strain SS9).